The sequence spans 181 residues: CDP-diacylglycerol--glycerol-3-phosphate 3-phosphatidyltransferase (181 aa).

The next 4 membrane-spanning stretches (helical) occupy residues 8 to 28 (PNYL…LFYI), 35 to 55 (KLGA…GYIA), 64 to 84 (FGKM…TIML), and 148 to 168 (IIYL…LTII).

It belongs to the CDP-alcohol phosphatidyltransferase class-I family.

It localises to the cell membrane. The enzyme catalyses a CDP-1,2-diacyl-sn-glycerol + sn-glycerol 3-phosphate = a 1,2-diacyl-sn-glycero-3-phospho-(1'-sn-glycero-3'-phosphate) + CMP + H(+). It participates in phospholipid metabolism; phosphatidylglycerol biosynthesis; phosphatidylglycerol from CDP-diacylglycerol: step 1/2. In terms of biological role, this protein catalyzes the committed step to the synthesis of the acidic phospholipids. The chain is CDP-diacylglycerol--glycerol-3-phosphate 3-phosphatidyltransferase (pgsA) from Rickettsia prowazekii (strain Madrid E).